The following is an 856-amino-acid chain: TPR repeat-containing protein TP_0123 (856 aa).

TPR repeat units follow at residues Tyr107 to Asp140, Tyr523 to Leu556, and Thr603 to Tyr636.

This is TPR repeat-containing protein TP_0123 from Treponema pallidum (strain Nichols).